The primary structure comprises 293 residues: Elongation factor Ts (293 aa).

An involved in Mg(2+) ion dislocation from EF-Tu region spans residues 80 to 83 (TDFV).

The protein belongs to the EF-Ts family.

The protein localises to the cytoplasm. Functionally, associates with the EF-Tu.GDP complex and induces the exchange of GDP to GTP. It remains bound to the aminoacyl-tRNA.EF-Tu.GTP complex up to the GTP hydrolysis stage on the ribosome. The protein is Elongation factor Ts of Burkholderia ambifaria (strain MC40-6).